Reading from the N-terminus, the 356-residue chain is Histidinol-phosphate aminotransferase (356 aa).

Lysine 214 carries the post-translational modification N6-(pyridoxal phosphate)lysine.

The protein belongs to the class-II pyridoxal-phosphate-dependent aminotransferase family. Histidinol-phosphate aminotransferase subfamily. Homodimer. Requires pyridoxal 5'-phosphate as cofactor.

The catalysed reaction is L-histidinol phosphate + 2-oxoglutarate = 3-(imidazol-4-yl)-2-oxopropyl phosphate + L-glutamate. It participates in amino-acid biosynthesis; L-histidine biosynthesis; L-histidine from 5-phospho-alpha-D-ribose 1-diphosphate: step 7/9. The polypeptide is Histidinol-phosphate aminotransferase (Escherichia coli O9:H4 (strain HS)).